Here is an 826-residue protein sequence, read N- to C-terminus: Zinc phosphodiesterase ELAC protein 2 (826 aa).

The transit peptide at 1–16 directs the protein to the mitochondrion; that stretch reads MWALCSLLRSATGRTM. The segment covering 15–27 has biased composition (polar residues); sequence TMSQGRTISQGSA. Disordered stretches follow at residues 15–53 and 187–231; these read TMSQ…GSSG and SEQR…VSQR. S199, S208, S212, S229, S618, and S736 each carry phosphoserine. A compositionally biased stretch (basic and acidic residues) spans 208–224; that stretch reads SPERSSDSESNESEPHL. The segment at 798–826 is disordered; it reads ALTDDLEDGEPQQKRAHTEEPQSKKVRAQ. Basic and acidic residues predominate over residues 808–820; it reads PQQKRAHTEEPQS.

It belongs to the RNase Z family. In terms of assembly, homodimer. Interacts with PTCD1. Zn(2+) serves as cofactor.

The protein resides in the mitochondrion. It localises to the mitochondrion matrix. It is found in the mitochondrion nucleoid. The protein localises to the nucleus. It catalyses the reaction Endonucleolytic cleavage of RNA, removing extra 3' nucleotides from tRNA precursor, generating 3' termini of tRNAs. A 3'-hydroxy group is left at the tRNA terminus and a 5'-phosphoryl group is left at the trailer molecule.. Functionally, zinc phosphodiesterase, which displays mitochondrial tRNA 3'-processing endonuclease activity. Involved in tRNA maturation, by removing a 3'-trailer from precursor tRNA. Associates with mitochondrial DNA complexes at the nucleoids to initiate RNA processing and ribosome assembly. In Macaca fascicularis (Crab-eating macaque), this protein is Zinc phosphodiesterase ELAC protein 2 (ELAC2).